Here is a 60-residue protein sequence, read N- to C-terminus: Large ribosomal subunit protein uL30 (60 aa).

Belongs to the universal ribosomal protein uL30 family. In terms of assembly, part of the 50S ribosomal subunit.

This Bacillus cereus (strain G9842) protein is Large ribosomal subunit protein uL30.